The sequence spans 350 residues: Anthranilate phosphoribosyltransferase (350 aa).

5-phospho-alpha-D-ribose 1-diphosphate contacts are provided by residues Gly82, 85-86 (GD), Ser90, 92-95 (NVST), 110-118 (KHGNRAVTG), and Gly122. Gly82 contributes to the anthranilate binding site. A Mg(2+)-binding site is contributed by Ser94. Residue Asn113 participates in anthranilate binding. Arg168 is a binding site for anthranilate. Mg(2+) contacts are provided by Asp232 and Glu233.

Belongs to the anthranilate phosphoribosyltransferase family. In terms of assembly, homodimer. Mg(2+) is required as a cofactor.

It carries out the reaction N-(5-phospho-beta-D-ribosyl)anthranilate + diphosphate = 5-phospho-alpha-D-ribose 1-diphosphate + anthranilate. It participates in amino-acid biosynthesis; L-tryptophan biosynthesis; L-tryptophan from chorismate: step 2/5. Functionally, catalyzes the transfer of the phosphoribosyl group of 5-phosphorylribose-1-pyrophosphate (PRPP) to anthranilate to yield N-(5'-phosphoribosyl)-anthranilate (PRA). The sequence is that of Anthranilate phosphoribosyltransferase from Methanothermobacter marburgensis (strain ATCC BAA-927 / DSM 2133 / JCM 14651 / NBRC 100331 / OCM 82 / Marburg) (Methanobacterium thermoautotrophicum).